The primary structure comprises 266 residues: Esterase AGAP003155 (266 aa).

Catalysis depends on charge relay system residues Ser-114, Asp-172, and His-199. A disordered region spans residues 231-266; the sequence is ATEENSFHLEGQEEAEESALQPVHEGLQNGSDSDSD.

It belongs to the LovG family.

In Anopheles gambiae (African malaria mosquito), this protein is Esterase AGAP003155.